Consider the following 732-residue polypeptide: E3 ubiquitin-protein ligase RNF19B (732 aa).

Residues 1–109 (MGSEKDSESP…PEEDEAAEGG (109 aa)) form a disordered region. Residues 1–315 (MGSEKDSESP…VCGCEFCWLC (315 aa)) are required for ubiquitin ligase activity and for protection against staurosporin-induced cell death. Residues 54–71 (AEPPPPAAPPPPPPPAPA) show a composition bias toward pro residues. Low complexity predominate over residues 72 to 99 (PVEAQAPPVEALPSEPAAEAEAEAVAAG). The span at 100–109 (PEEDEAAEGG) shows a compositional bias: acidic residues. The interval 112-334 (EEVECPLCLV…LSPSGCTFWG (223 aa)) is TRIAD supradomain. Cysteine 116, cysteine 119, cysteine 139, cysteine 142, cysteine 203, cysteine 208, cysteine 225, cysteine 230, cysteine 235, cysteine 238, histidine 243, cysteine 248, cysteine 284, and cysteine 287 together coordinate Zn(2+). The RING-type 1 zinc finger occupies 116-165 (CPLCLVRLPPERAPRLLSCPHRSCRDCLRHYLRLEISESRVPISCPECSE). Residues 183–248 (HKYEEFMLRR…KQIWHPNQTC (66 aa)) form an IBR-type zinc finger. The RING-type 2; atypical zinc-finger motif lies at 284–315 (CPRCSAYIIKMNDGSCNHMTCAVCGCEFCWLC). The active site involves cysteine 299. The Zn(2+) site is built by cysteine 304, cysteine 307, cysteine 312, cysteine 315, histidine 323, and cysteine 330. 2 helical membrane passes run 351–371 (LIGA…AMVI) and 412–432 (VIAA…VYGV). 2 disordered regions span residues 598-644 (QLVS…QSCE) and 660-732 (QPES…YEVE). Over residues 674–683 (QSDDVPDITS) the composition is skewed to acidic residues.

Belongs to the RBR family. RNF19 subfamily. In terms of assembly, interacts with UBE2L3, UBE2L6 and UCKL1. In terms of tissue distribution, expressed specifically in natural killer cells, activated macrophages and cytotoxic T-cells. Present in macrophages (at protein level). Ubiquitously expressed with high expression in testis.

It is found in the cytoplasmic granule membrane. The protein resides in the endoplasmic reticulum membrane. The catalysed reaction is [E2 ubiquitin-conjugating enzyme]-S-ubiquitinyl-L-cysteine + [acceptor protein]-L-lysine = [E2 ubiquitin-conjugating enzyme]-L-cysteine + [acceptor protein]-N(6)-ubiquitinyl-L-lysine.. It functions in the pathway protein modification; protein ubiquitination. Its function is as follows. E3 ubiquitin-protein ligase which accepts ubiquitin from E2 ubiquitin-conjugating enzymes UBE2L3 and UBE2L6 in the form of a thioester and then directly transfers the ubiquitin to targeted substrates, such as UCKL1. Involved in the cytolytic activity of natural killer cells and cytotoxic T-cells. Protects against staurosporin-induced cell death. This is E3 ubiquitin-protein ligase RNF19B (Rnf19b) from Mus musculus (Mouse).